The following is a 383-amino-acid chain: 8-amino-7-oxononanoate synthase (383 aa).

R23 serves as a coordination point for substrate. 110 to 111 contacts pyridoxal 5'-phosphate; that stretch reads GF. H135 lines the substrate pocket. Residues S181, H209, and T235 each contribute to the pyridoxal 5'-phosphate site. Residue K238 is modified to N6-(pyridoxal phosphate)lysine. T351 is a substrate binding site.

The protein belongs to the class-II pyridoxal-phosphate-dependent aminotransferase family. BioF subfamily. As to quaternary structure, homodimer. Pyridoxal 5'-phosphate serves as cofactor.

The enzyme catalyses 6-carboxyhexanoyl-[ACP] + L-alanine + H(+) = (8S)-8-amino-7-oxononanoate + holo-[ACP] + CO2. It participates in cofactor biosynthesis; biotin biosynthesis. Its function is as follows. Catalyzes the decarboxylative condensation of pimeloyl-[acyl-carrier protein] and L-alanine to produce 8-amino-7-oxononanoate (AON), [acyl-carrier protein], and carbon dioxide. This Aliivibrio fischeri (strain MJ11) (Vibrio fischeri) protein is 8-amino-7-oxononanoate synthase.